Reading from the N-terminus, the 524-residue chain is Ribosomal protein uS12 methylthiotransferase RimO (524 aa).

A compositionally biased stretch (polar residues) spans 20-31 (NSQTASDSTQPA). Residues 20–59 (NSQTASDSTQPAASAYHHKANHNQNRSIEQSAQQAAEQSL) are disordered. A compositionally biased stretch (low complexity) spans 48 to 58 (EQSAQQAAEQS). The MTTase N-terminal domain occupies 67–177 (PKVGFVSLGC…VITAVSTHAP (111 aa)). Positions 76, 112, 141, 216, 220, and 223 each coordinate [4Fe-4S] cluster. Positions 202-443 (LTPSHYAYLK…MAVQQQISEQ (242 aa)) constitute a Radical SAM core domain. One can recognise a TRAM domain in the interval 446 to 519 (QEKVGKTMTV…EYDLFASYDA (74 aa)).

It belongs to the methylthiotransferase family. RimO subfamily. Requires [4Fe-4S] cluster as cofactor.

The protein localises to the cytoplasm. The catalysed reaction is L-aspartate(89)-[ribosomal protein uS12]-hydrogen + (sulfur carrier)-SH + AH2 + 2 S-adenosyl-L-methionine = 3-methylsulfanyl-L-aspartate(89)-[ribosomal protein uS12]-hydrogen + (sulfur carrier)-H + 5'-deoxyadenosine + L-methionine + A + S-adenosyl-L-homocysteine + 2 H(+). Catalyzes the methylthiolation of an aspartic acid residue of ribosomal protein uS12. The chain is Ribosomal protein uS12 methylthiotransferase RimO from Psychrobacter sp. (strain PRwf-1).